The chain runs to 626 residues: Lysine--tRNA ligase, cytoplasmic (626 aa).

N-acetylmethionine is present on methionine 1. Polar residues-rich tracts occupy residues 1 to 11 (MEGAADQTTKA) and 18 to 27 (DSSTTLNAAE). The tract at residues 1 to 84 (MEGAADQTTK…QKAVAADDEE (84 aa)) is disordered. Positions 37-69 (RSKNALKKEQKMKQKEEEKRRKDEEKAEKAKQA) form a coiled coil. Over residues 42-67 (LKKEQKMKQKEEEKRRKDEEKAEKAK) the composition is skewed to basic and acidic residues. The segment covering 69 to 78 (APKASSQKAV) has biased composition (low complexity). The OB DNA-binding region spans 141 to 217 (SLAGRIMSKR…RGELSIFPRS (77 aa)). The substrate site is built by glycine 313 and glutamate 337. ATP is bound by residues 359–361 (RNE) and 367–368 (HN). 2 residues coordinate substrate: glutamate 375 and tyrosine 377. Ca(2+) is bound by residues glutamate 521 and glutamate 528. 528 to 529 (EL) is an ATP binding site. Residues asparagine 531 and glutamate 535 each coordinate substrate. 584–587 (GIDR) contacts ATP.

This sequence belongs to the class-II aminoacyl-tRNA synthetase family. It depends on Ca(2+) as a cofactor.

It localises to the cytoplasm. It is found in the cytosol. The enzyme catalyses tRNA(Lys) + L-lysine + ATP = L-lysyl-tRNA(Lys) + AMP + diphosphate. Functionally, catalyzes the specific attachment of an amino acid to its cognate tRNA in a 2 step reaction: the amino acid (AA) is first activated by ATP to form AA-AMP and then transferred to the acceptor end of the tRNA. Promotes aminoacylation of non-cognate tRNAs and translational recoding of lysine at nonsense codons. This chain is Lysine--tRNA ligase, cytoplasmic, found in Arabidopsis thaliana (Mouse-ear cress).